Reading from the N-terminus, the 140-residue chain is MRHGISQRKLSRKSGHRKALFRNMSAALIKHEQIVTTLPKAKELRPYVEKLITLAKRGGLSNRRLAMGRLQDETQLKKLFDELADRYSDRDGGYTRIVKAGYRASDSAQLAVIELVDRDEDAKGQDSGPVMVDEDDFAEA.

The disordered stretch occupies residues 120–140; that stretch reads EDAKGQDSGPVMVDEDDFAEA.

This sequence belongs to the bacterial ribosomal protein bL17 family. As to quaternary structure, part of the 50S ribosomal subunit. Contacts protein L32.

The chain is Large ribosomal subunit protein bL17 from Erythrobacter litoralis (strain HTCC2594).